The sequence spans 546 residues: Adenine DNA glycosylase (546 aa).

Residues 19–51 are disordered; that stretch reads RAAVGSGHRKQAASQEGRQKHAKNNSQAKPSAC. The active-site Proton donor/acceptor is glutamate 131. Residues cysteine 287, cysteine 294, cysteine 297, and cysteine 303 each coordinate [4Fe-4S] cluster. The 132-residue stretch at 364–495 folds into the Nudix hydrolase domain; that stretch reads PREESSATCV…AMKKVFRVYQ (132 aa). The Nudix box signature appears at 404–426; that stretch reads VTWEPSEQLQRKALLQELQRWAG.

The protein belongs to the Nth/MutY family. It depends on [4Fe-4S] cluster as a cofactor.

It is found in the nucleus. The protein resides in the mitochondrion. It catalyses the reaction Hydrolyzes free adenine bases from 7,8-dihydro-8-oxoguanine:adenine mismatched double-stranded DNA, leaving an apurinic site.. Involved in oxidative DNA damage repair. Initiates repair of A*oxoG to C*G by removing the inappropriately paired adenine base from the DNA backbone. Possesses both adenine and 2-OH-A DNA glycosylase activities. The polypeptide is Adenine DNA glycosylase (MUTYH) (Homo sapiens (Human)).